The following is a 396-amino-acid chain: Probable sugar efflux transporter (396 aa).

The next 12 helical transmembrane spans lie at 15-35, 50-70, 81-101, 103-123, 136-156, 170-190, 209-229, 246-266, 275-295, 299-319, 333-353, and 364-384; these read VVTL…PVGL, VGIM…PFML, LICL…SWSF, VLVI…SITA, AQAL…GLPL, FFAI…LLPL, PALM…YTAY, FATA…VIFG, ALVS…LPAA, IHLG…GLGM, VAMA…ALVG, and MIGY…IIIF.

This sequence belongs to the major facilitator superfamily. SotB (TC 2.A.1.2) family.

The protein resides in the cell inner membrane. Involved in the efflux of sugars. The physiological role may be the reduction of the intracellular concentration of toxic sugars or sugar metabolites. This is Probable sugar efflux transporter from Shigella flexneri serotype 5b (strain 8401).